Here is a 199-residue protein sequence, read N- to C-terminus: Peroxiredoxin-1 (199 aa).

The region spanning 6–165 (AYIGKLAPDF…TLRLVQAFQF (160 aa)) is the Thioredoxin domain. The Cysteine sulfenic acid (-SOH) intermediate role is filled by cysteine 52.

Belongs to the peroxiredoxin family. AhpC/Prx1 subfamily. Homodimer; disulfide-linked, upon oxidation. 5 homodimers assemble to form a ring-like decamer. Interacts with GDPD5; forms a mixed-disulfide with GDPD5. Interacts with SESN1 and SESN2. Interacts with FAM107A. Post-translationally, the enzyme can be inactivated by further oxidation of the cysteine sulfenic acid (C(P)-SOH) to sulphinic acid (C(P)-SO2H) instead of its condensation to a disulfide bond. It can be reactivated by forming a transient disulfide bond with sulfiredoxin SRXN1, which reduces the cysteine sulfinic acid in an ATP- and Mg-dependent manner.

Its subcellular location is the cytoplasm. The enzyme catalyses a hydroperoxide + [thioredoxin]-dithiol = an alcohol + [thioredoxin]-disulfide + H2O. In terms of biological role, thiol-specific peroxidase that catalyzes the reduction of hydrogen peroxide and organic hydroperoxides to water and alcohols, respectively. Plays a role in cell protection against oxidative stress by detoxifying peroxides and as sensor of hydrogen peroxide-mediated signaling events. Might participate in the signaling cascades of growth factors and tumor necrosis factor-alpha by regulating the intracellular concentrations of H(2)O(2). Reduces an intramolecular disulfide bond in GDPD5 that gates the ability to GDPD5 to drive postmitotic motor neuron differentiation. The protein is Peroxiredoxin-1 (PRDX1) of Gekko japonicus (Schlegel's Japanese gecko).